A 348-amino-acid chain; its full sequence is tRNA N6-adenosine threonylcarbamoyltransferase (348 aa).

Fe cation contacts are provided by His116 and His120. Residues 138-142, Asp171, Gly184, Asp188, and Asn277 contribute to the substrate site; that span reads QVSGG. Asp309 provides a ligand contact to Fe cation.

The protein belongs to the KAE1 / TsaD family. Fe(2+) is required as a cofactor.

The protein localises to the cytoplasm. It carries out the reaction L-threonylcarbamoyladenylate + adenosine(37) in tRNA = N(6)-L-threonylcarbamoyladenosine(37) in tRNA + AMP + H(+). Its function is as follows. Required for the formation of a threonylcarbamoyl group on adenosine at position 37 (t(6)A37) in tRNAs that read codons beginning with adenine. Is involved in the transfer of the threonylcarbamoyl moiety of threonylcarbamoyl-AMP (TC-AMP) to the N6 group of A37, together with TsaE and TsaB. TsaD likely plays a direct catalytic role in this reaction. The chain is tRNA N6-adenosine threonylcarbamoyltransferase from Lactobacillus gasseri (strain ATCC 33323 / DSM 20243 / BCRC 14619 / CIP 102991 / JCM 1131 / KCTC 3163 / NCIMB 11718 / NCTC 13722 / AM63).